The primary structure comprises 279 residues: Oxygen-dependent coproporphyrinogen-III oxidase (279 aa).

Residue S102 coordinates substrate. Residues H106 and H116 each contribute to the a divalent metal cation site. H116 serves as the catalytic Proton donor. N118–R120 is a substrate binding site. A divalent metal cation-binding residues include H149 and H179. Residues Y244–N279 are important for dimerization.

The protein belongs to the aerobic coproporphyrinogen-III oxidase family. In terms of assembly, homodimer. The cofactor is a divalent metal cation.

The protein localises to the cytoplasm. It carries out the reaction coproporphyrinogen III + O2 + 2 H(+) = protoporphyrinogen IX + 2 CO2 + 2 H2O. Its pathway is porphyrin-containing compound metabolism; protoporphyrin-IX biosynthesis; protoporphyrinogen-IX from coproporphyrinogen-III (O2 route): step 1/1. Involved in the heme biosynthesis. Catalyzes the aerobic oxidative decarboxylation of propionate groups of rings A and B of coproporphyrinogen-III to yield the vinyl groups in protoporphyrinogen-IX. This Rickettsia typhi (strain ATCC VR-144 / Wilmington) protein is Oxygen-dependent coproporphyrinogen-III oxidase.